The chain runs to 304 residues: uncharacterized protein (304 aa).

The first 25 residues, 1–25, serve as a signal peptide directing secretion; it reads MVKTAMLGAVALVIALGGTCGVADA. Residues 34-303 enclose the GP-PDE domain; that stretch reads PMIVAHRAGT…DSPLAAQQWR (270 aa).

This is an uncharacterized protein from Mycobacterium tuberculosis (strain CDC 1551 / Oshkosh).